The chain runs to 130 residues: Methylglyoxal synthase (130 aa).

The MGS-like domain occupies 1–130 (MSKPRIALIA…DLARTMQDVC (130 aa)). Residues histidine 11, lysine 15, 37–40 (TGTT), and 57–58 (SG) each bind substrate. Aspartate 63 serves as the catalytic Proton donor/acceptor. Histidine 90 provides a ligand contact to substrate.

This sequence belongs to the methylglyoxal synthase family.

It catalyses the reaction dihydroxyacetone phosphate = methylglyoxal + phosphate. Its function is as follows. Catalyzes the formation of methylglyoxal from dihydroxyacetone phosphate. The protein is Methylglyoxal synthase of Burkholderia multivorans (strain ATCC 17616 / 249).